A 284-amino-acid polypeptide reads, in one-letter code: Distal membrane arm assembly component 2 (284 aa).

This sequence belongs to the ATP synthase subunit s family. In terms of assembly, associates with mitochondrial complex I assembly intermediates during its biogenesis.

Functionally, involved in the assembly of the mitochondrial membrane respiratory chain NADH dehydrogenase (Complex I). The protein is Distal membrane arm assembly component 2 of Drosophila melanogaster (Fruit fly).